A 58-amino-acid chain; its full sequence is MARRKKYEGLNPFVAAGLIKFSEEGEMERIKLSPKAAIAVSAAIIAALIIINLLLPPL.

Over 1–33 the chain is Cytoplasmic; that stretch reads MARRKKYEGLNPFVAAGLIKFSEEGEMERIKLS. The helical transmembrane segment at 34 to 55 threads the bilayer; that stretch reads PKAAIAVSAAIIAALIIINLLL. Topologically, residues 56-58 are extracellular; sequence PPL.

Belongs to the SEC61-beta family. As to quaternary structure, component of the protein translocase complex. Heterotrimer consisting of alpha (SecY), beta (SecG) and gamma (SecE) subunits. Can form oligomers of the heterotrimer.

Its subcellular location is the cell membrane. Functionally, involved in protein export. The function of the beta subunit is unknown, but it may be involved in stabilization of the trimeric complex. In Pyrobaculum arsenaticum (strain DSM 13514 / JCM 11321 / PZ6), this protein is Preprotein translocase subunit SecG.